The primary structure comprises 339 residues: Phosphatidylglycerol--prolipoprotein diacylglyceryl transferase (339 aa).

3 consecutive transmembrane segments (helical) span residues 43-63, 81-101, and 121-141; these read FTIA…YWLG, ILWM…LTSW, and NGGI…IYFA. An a 1,2-diacyl-sn-glycero-3-phospho-(1'-sn-glycerol)-binding site is contributed by Arg-167. The next 2 membrane-spanning stretches (helical) occupy residues 231-251 and 300-320; these read FTQL…YFWL and LWTD…WMLW.

It belongs to the Lgt family.

It localises to the cell membrane. It carries out the reaction L-cysteinyl-[prolipoprotein] + a 1,2-diacyl-sn-glycero-3-phospho-(1'-sn-glycerol) = an S-1,2-diacyl-sn-glyceryl-L-cysteinyl-[prolipoprotein] + sn-glycerol 1-phosphate + H(+). The protein operates within protein modification; lipoprotein biosynthesis (diacylglyceryl transfer). Its function is as follows. Catalyzes the transfer of the diacylglyceryl group from phosphatidylglycerol to the sulfhydryl group of the N-terminal cysteine of a prolipoprotein, the first step in the formation of mature lipoproteins. In Deinococcus radiodurans (strain ATCC 13939 / DSM 20539 / JCM 16871 / CCUG 27074 / LMG 4051 / NBRC 15346 / NCIMB 9279 / VKM B-1422 / R1), this protein is Phosphatidylglycerol--prolipoprotein diacylglyceryl transferase.